The chain runs to 189 residues: Chitin synthase 3 (189 aa).

This sequence belongs to the chitin synthase family. Class II subfamily.

The protein localises to the cell membrane. It carries out the reaction [(1-&gt;4)-N-acetyl-beta-D-glucosaminyl](n) + UDP-N-acetyl-alpha-D-glucosamine = [(1-&gt;4)-N-acetyl-beta-D-glucosaminyl](n+1) + UDP + H(+). Functionally, polymerizes chitin, a structural polymer of the cell wall and septum, by transferring the sugar moiety of UDP-GlcNAc to the non-reducing end of the growing chitin polymer. This Ajellomyces capsulatus (Darling's disease fungus) protein is Chitin synthase 3 (CHS3).